Consider the following 323-residue polypeptide: MMSNENFDNDYNLPPPNDSAEDLKIFIKRYERSVDSTLLEIDENKREALEKYIEERDRKMKYEIECNERLQGWKKLAIEREISEEQSGEVQFPRWIDEWANTKLGGIFERIFSKMDSMQNDMNSRFDAMQNEMNSRFDAVQNEMTSMKGEMAEMKVEMVEMKRETIRLNTRIDLLEQKTEARFQSIEQRFNSIDQRFNSIDRRFDSMEQRLDSMDQKMETIDARSCRSIMLTRKLENTTRSDQGYLASPVPFLNGNEPANSGLPPIERVEDIDELSKEQCVQYLKGYGIMFSPAETIKLKKRLRDAVGLWSKASTEYEFHQFH.

Coiled coils occupy residues 27-63 and 131-225; these read IKRYERSVDSTLLEIDENKREALEKYIEERDRKMKYE and NEMN…DARS.

Belongs to the UPF0612 family.

The chain is UPF0612 protein C569.01c from Schizosaccharomyces pombe (strain 972 / ATCC 24843) (Fission yeast).